Reading from the N-terminus, the 363-residue chain is 3-isopropylmalate dehydrogenase (363 aa).

Residue 78–91 participates in NAD(+) binding; sequence GPKWENLPPESQPE. 4 residues coordinate substrate: R99, R109, R138, and D227. Residues D227, D251, and D255 each contribute to the Mg(2+) site. An NAD(+)-binding site is contributed by 285 to 297; the sequence is GSAPDIAGKNIAN.

It belongs to the isocitrate and isopropylmalate dehydrogenases family. LeuB type 1 subfamily. Homodimer. Mg(2+) is required as a cofactor. The cofactor is Mn(2+).

It is found in the cytoplasm. It catalyses the reaction (2R,3S)-3-isopropylmalate + NAD(+) = 4-methyl-2-oxopentanoate + CO2 + NADH. It participates in amino-acid biosynthesis; L-leucine biosynthesis; L-leucine from 3-methyl-2-oxobutanoate: step 3/4. Functionally, catalyzes the oxidation of 3-carboxy-2-hydroxy-4-methylpentanoate (3-isopropylmalate) to 3-carboxy-4-methyl-2-oxopentanoate. The product decarboxylates to 4-methyl-2 oxopentanoate. This is 3-isopropylmalate dehydrogenase from Salmonella paratyphi A (strain ATCC 9150 / SARB42).